Here is a 115-residue protein sequence, read N- to C-terminus: Guanylin (115 aa).

The N-terminal stretch at 1–23 (MNAWLLSVLCLLGALAVLVEGVT) is a signal peptide. Positions 24–100 (VQDGDLSFPL…LQRLEAIAQD (77 aa)) are excised as a propeptide. Disulfide bonds link C69/C82, C104/C112, and C107/C115.

Belongs to the guanylin family. In terms of tissue distribution, intestine and in low abundance in adrenal gland, kidney, and uterus/oviduct.

The protein localises to the secreted. Its function is as follows. Endogenous activator of intestinal guanylate cyclase. It stimulates this enzyme through the same receptor binding region as the heat-stable enterotoxins. This chain is Guanylin (Guca2a), found in Rattus norvegicus (Rat).